The primary structure comprises 382 residues: Per os infectivity factor 2 (382 aa).

Forms the PIF complex together with PIF1 and PIF3. The complex also interacts with per os infectivity factor PIF0.

Its function is as follows. Per os infectivity factor that mediates the specific binding of occluded virions (ODV) to the host midgut target cells. The protein is Per os infectivity factor 2 of Autographa californica nuclear polyhedrosis virus (AcMNPV).